A 192-amino-acid chain; its full sequence is Ion-translocating oxidoreductase complex subunit A (192 aa).

6 helical membrane passes run 5–25 (LLLLISTVLVNNFVLVKFLGL), 39–59 (IGMSMATTFVLTLASILSYLV), 65–85 (LPFDLGYLRTMSFILVIAVVV), 102–122 (ALGIYLPLITTNCAVLGVALL), 134–154 (AIYGFGAAVGFSLVLILFSAM), and 171–191 (AIAMITAGLMSLAFMGFTGLV).

Belongs to the NqrDE/RnfAE family. The complex is composed of six subunits: RnfA, RnfB, RnfC, RnfD, RnfE and RnfG.

The protein resides in the cell inner membrane. Its function is as follows. Part of a membrane-bound complex that couples electron transfer with translocation of ions across the membrane. In Shewanella oneidensis (strain ATCC 700550 / JCM 31522 / CIP 106686 / LMG 19005 / NCIMB 14063 / MR-1), this protein is Ion-translocating oxidoreductase complex subunit A.